The following is a 700-amino-acid chain: Hedgehog-interacting protein (700 aa).

Residues 1 to 17 form the signal peptide; sequence MLKMLSFKLLLLAVALG. N-linked (GlcNAc...) asparagine glycosylation is present at N99. 11 disulfides stabilise this stretch: C216-C536, C218-C543, C402-C624, C435-C452, C500-C594, C608-C617, C612-C623, C625-C634, C639-C649, C643-C655, and C657-C666. Residues 376-388 are interaction with SHH zinc binding site; it reads LDDMEEMDGLSDF. Residue D383 participates in Zn(2+) binding. N-linked (GlcNAc...) asparagine glycosylation is found at N416, N447, and N459. EGF-like domains are found at residues 607 to 634 and 635 to 667; these read ECSRLCRNGYCTPTGKCCCSPGWEGDFC and RTAKCEPACRHGGVCVRPNKCLCKKGYLGPQCE.

It belongs to the HHIP family. In terms of assembly, interacts with all three hedgehog family members, SHH, IHH and DHH. Widely expressed in fetal and adult tissues. Highest expression in adult heart, liver and pancreas, and in fetal kidney.

The protein resides in the cell membrane. It localises to the secreted. It is found in the cytoplasm. Its function is as follows. Modulates hedgehog signaling in several cell types including brain and lung through direct interaction with members of the hedgehog family. The chain is Hedgehog-interacting protein (HHIP) from Homo sapiens (Human).